The primary structure comprises 93 residues: Allatostatin C (93 aa).

The first 23 residues, 1 to 23, serve as a signal peptide directing secretion; that stretch reads MSSVRNIAALALVLLVLAEWSAA. The propeptide occupies 24–61; sequence MPTTDKDKERLLNTVDLIDDDGSIETALINYLFTKQIV. A disulfide bond links C83 and C90.

The protein resides in the secreted. Inhibits juvenile hormone biosynthesis. This Camponotus floridanus (Florida carpenter ant) protein is Allatostatin C.